Consider the following 994-residue polypeptide: Translation initiation factor IF-2 (994 aa).

Composition is skewed to polar residues over residues 1-10 (MSDENNNGRN) and 28-40 (SVSS…SFSH). A disordered region spans residues 1–405 (MSDENNNGRN…REKRKGGAQE (405 aa)). A compositionally biased stretch (low complexity) spans 76–91 (PQKPAGPAQAPRAPQG). Residues 98–131 (AEERAARQRAIELARQQEADRRAREERARAEAEA) are compositionally biased toward basic and acidic residues. Residues 132–146 (ARAAQQKAAQAAAEP) are compositionally biased toward low complexity. A compositionally biased stretch (pro residues) spans 147–157 (PAAPPPAPAAP). The segment covering 158-172 (PAAAAPAAPAAEAAP) has biased composition (low complexity). Pro residues predominate over residues 173-188 (APKPAPSPRPVPPSAP). Low complexity predominate over residues 189-204 (APQAARPAAEAPPRQA). 2 stretches are compositionally biased toward basic and acidic residues: residues 216-235 (PDRR…RPSN) and 247-273 (PRRD…DRPQ). Residues 298–310 (RGPGGPRGPGGPR) are compositionally biased toward gly residues. 2 stretches are compositionally biased toward basic and acidic residues: residues 336–350 (VDRR…RDPG) and 390–402 (RARE…RKGG). Positions 492–662 (PRPPVVAVMG…LLQAEVLDLK (171 aa)) constitute a tr-type G domain. The segment at 501-508 (GHVDHGKT) is G1. A GTP-binding site is contributed by 501 to 508 (GHVDHGKT). Positions 526 to 530 (GITQH) are G2. The interval 548–551 (DTPG) is G3. GTP contacts are provided by residues 548-552 (DTPGH) and 602-605 (NKID). The interval 602 to 605 (NKID) is G4. Residues 638–640 (SAT) form a G5 region.

This sequence belongs to the TRAFAC class translation factor GTPase superfamily. Classic translation factor GTPase family. IF-2 subfamily.

The protein resides in the cytoplasm. Its function is as follows. One of the essential components for the initiation of protein synthesis. Protects formylmethionyl-tRNA from spontaneous hydrolysis and promotes its binding to the 30S ribosomal subunits. Also involved in the hydrolysis of GTP during the formation of the 70S ribosomal complex. The polypeptide is Translation initiation factor IF-2 (Phenylobacterium zucineum (strain HLK1)).